The sequence spans 468 residues: ERO1-like protein alpha (468 aa).

Residues 1–23 form the signal peptide; the sequence is MGRGWGFLFGLLGAVWLLSSGHG. Cystine bridges form between C35-C48, C37-C46, C85-C391, C94-C99, C94-C131, C99-C104, C208-C241, and C394-C397. Phosphoserine is present on residues S106 and S143. A Phosphoserine; by FAM20C modification is found at S145. FAD-binding residues include R187, T189, and W200. 2 residues coordinate FAD: S252 and H255. N-linked (GlcNAc...) asparagine glycosylation occurs at N280. 2 residues coordinate FAD: R287 and R300. N384 carries an N-linked (GlcNAc...) asparagine glycan.

It belongs to the EROs family. In terms of assembly, predominantly monomer. May function both as a monomer and a homodimer. Interacts with PDILT. Interacts with ERP44; the interaction results in retention of ERO1A in the endoplasmic reticulum. It depends on FAD as a cofactor. In terms of processing, N-glycosylated. The Cys-94/Cys-99 and Cys-394/Cys-397 disulfide bonds constitute the redox-active center. The Cys-94/Cys-99 disulfide bond may accept electron from P4HB and funnel them to the active site disulfide Cys-394/Cys-397. The regulatory Cys-99/Cys-104 disulfide bond stabilizes the other regulatory bond Cys-94/Cys-131. Post-translationally, phosphorylated on Ser-145 by FAM20C in the Golgi which increases its enzymatic activity. Phosphorylation is induced by lactation. It is also induced by hypoxia and reductive stress. In terms of tissue distribution, widely expressed at low level. Expressed at high level in upper digestive tract. Highly expressed in esophagus. Weakly expressed in stomach and duodenum.

The protein localises to the endoplasmic reticulum membrane. The protein resides in the golgi apparatus lumen. It is found in the secreted. It localises to the cell projection. Its subcellular location is the dendrite. With respect to regulation, enzyme activity is tightly regulated to prevent the accumulation of reactive oxygen species in the endoplasmic reticulum. Reversibly down-regulated by the formation of disulfide bonds between the active site Cys-94 and Cys-131, and between Cys-99 and Cys-104. Glutathione may be required to regulate its activity in the endoplasmic reticulum. Functionally, oxidoreductase involved in disulfide bond formation in the endoplasmic reticulum. Efficiently reoxidizes P4HB/PDI, the enzyme catalyzing protein disulfide formation, in order to allow P4HB to sustain additional rounds of disulfide formation. Following P4HB reoxidation, passes its electrons to molecular oxygen via FAD, leading to the production of reactive oxygen species (ROS) in the cell. Required for the proper folding of immunoglobulins. Plays an important role in ER stress-induced, CHOP-dependent apoptosis by activating the inositol 1,4,5-trisphosphate receptor IP3R1. Involved in the release of the unfolded cholera toxin from reduced P4HB/PDI in case of infection by V.cholerae, thereby playing a role in retrotranslocation of the toxin. This is ERO1-like protein alpha from Homo sapiens (Human).